Consider the following 388-residue polypeptide: Phosphoglycerate kinase (388 aa).

Substrate is bound by residues Asp-21 to Asn-23, Arg-36, His-59 to Arg-62, Arg-114, and Arg-147. Residues Lys-198, Glu-315, and Gly-341 to Thr-344 contribute to the ATP site.

It belongs to the phosphoglycerate kinase family. In terms of assembly, monomer.

The protein resides in the cytoplasm. It carries out the reaction (2R)-3-phosphoglycerate + ATP = (2R)-3-phospho-glyceroyl phosphate + ADP. Its pathway is carbohydrate degradation; glycolysis; pyruvate from D-glyceraldehyde 3-phosphate: step 2/5. This Buchnera aphidicola subsp. Schizaphis graminum (strain Sg) protein is Phosphoglycerate kinase.